A 373-amino-acid chain; its full sequence is MWAAGRWGPTFPSSYAGFSADCRPRSRPSSDSCSVPMTGARGQGLEVVRSPSPPLPLSCSNSTRSLLSPLGHQSFQFDEDDGDGEDEEDVDDEEDVDEDAHDSEAKVASLRGMELQGCASTQVESENNQEEQKQVRLPESRLTPWEVWFIGKEKEERDRLQLKALEELNQQLEKRKEMEEREKRKIIAEEKHKEWVQKKNEQKRKEREQKINKEMEEKAAKELEKEYLQEKAKEKYQEWLKKKNAEECERKKKEKEKEKQQQAEIQEKKEIAEKKFQEWLENAKHKPRPAAKSYGYANGKLTGFYSGNSYPEPAFYNPIPWKPIHMPPPKEAKDLSGRKSKRPVISQPHKSSSLVIHKARSNLCLGTLCRIQR.

2 disordered regions span residues Met-1–Gly-112 and Cys-118–Leu-137. Position 52 is a phosphoserine (Ser-52). Polar residues predominate over residues Asn-61 to Gln-76. Over residues Phe-77–His-101 the composition is skewed to acidic residues. Residues Lys-152–Lys-286 adopt a coiled-coil conformation. Residues Ile-324–Ser-352 form a disordered region. The span at Pro-328–Gly-337 shows a compositional bias: basic and acidic residues.

As to expression, expressed in sperm.

It localises to the cell projection. The protein resides in the cilium. Its subcellular location is the flagellum. Functionally, involved in spermatogenesis. Has a probable role in anterograde intraflagellar transport which is essential for the formation of sperm flagella. In Homo sapiens (Human), this protein is Coiled-coil domain-containing protein 34 (CCDC34).